The primary structure comprises 244 residues: Small ribosomal subunit protein eS4 (244 aa).

In terms of domain architecture, S4 RNA-binding spans 43-106 (LPLLLVVRDV…DENYLVLFDE (64 aa)).

The protein belongs to the eukaryotic ribosomal protein eS4 family.

This Methanococcus maripaludis (strain C5 / ATCC BAA-1333) protein is Small ribosomal subunit protein eS4.